A 162-amino-acid polypeptide reads, in one-letter code: Protein-export protein SecB (162 aa).

Belongs to the SecB family. As to quaternary structure, homotetramer, a dimer of dimers. One homotetramer interacts with 1 SecA dimer.

It localises to the cytoplasm. Its function is as follows. One of the proteins required for the normal export of preproteins out of the cell cytoplasm. It is a molecular chaperone that binds to a subset of precursor proteins, maintaining them in a translocation-competent state. It also specifically binds to its receptor SecA. In Pseudomonas savastanoi pv. phaseolicola (strain 1448A / Race 6) (Pseudomonas syringae pv. phaseolicola (strain 1448A / Race 6)), this protein is Protein-export protein SecB.